A 166-amino-acid chain; its full sequence is Putative lipoprotein Lxx21020 (166 aa).

An N-terminal signal peptide occupies residues 1 to 22; the sequence is MTKTTRLLRATTVAAILLGLTG. A lipid anchor (N-palmitoyl cysteine) is attached at Cys-23. The S-diacylglycerol cysteine moiety is linked to residue Cys-23.

It localises to the cell membrane. This is Putative lipoprotein Lxx21020 from Leifsonia xyli subsp. xyli (strain CTCB07).